We begin with the raw amino-acid sequence, 570 residues long: RNA polymerase I termination factor (570 aa).

The span at 1 to 16 shows a compositional bias: polar residues; that stretch reads MDSVSNLKSTNFQNNN. Disordered stretches follow at residues 1 to 21, 37 to 68, and 100 to 138; these read MDSVSNLKSTNFQNNNDPKES, HIKKTKKKLKKQKKRKHGSKMSHEDEDTDMDW, and SSMREKDKRSCHKKSSNSRSERKKHRKRKSSKERKAKIK. The span at 37–56 shows a compositional bias: basic residues; sequence HIKKTKKKLKKQKKRKHGSK. T64 is modified (phosphothreonine). Residues 108 to 137 are compositionally biased toward basic residues; it reads RSCHKKSSNSRSERKKHRKRKSSKERKAKI. Positions 273–339 constitute a Myb-like 1 domain; that stretch reads KFTPSEENAL…SIYKHIRRKY (67 aa). Residues 340–391 enclose the HTH myb-type domain; it reads HIFEQRGKWTPEEDQELARLCLEKEGHWTEVGKLLGRMPEDCRDRWRNYMKC. The H-T-H motif DNA-binding region spans 367–389; it reads WTEVGKLLGRMPEDCRDRWRNYM. 2 consecutive Myb-like domains span residues 392–486 and 493–549; these read GSKR…NKLV and SMLS…MREK.

In terms of assembly, interacts with FOB1. Interacts with the RENT complex subunits NET1 and SIR2.

The protein resides in the nucleus. It is found in the nucleolus. Its function is as follows. DNA-binding protein that recognizes sequence-specific replication termini (Ter sites) within rDNA. Binds to rDNA terminator elements and mediates efficient RNA polymerase I transcription termination. Required for rDNA silencing at the non-transcribed spacer 1 (NTS1). Promotes the association of SIR2 with NTS1 and contributes to maintenance of rDNA stability. In Saccharomyces cerevisiae (strain ATCC 204508 / S288c) (Baker's yeast), this protein is RNA polymerase I termination factor.